Reading from the N-terminus, the 107-residue chain is Homeobox protein HD-3 (107 aa).

Positions 6-65 form a DNA-binding region, homeobox; sequence SKAPRTRMTAGQTRVLMSFFKDNPFPSTTAREKLSKVLGVGPRTVQIWFQNQRQKARGQA.

It localises to the nucleus. In Encephalitozoon cuniculi (strain GB-M1) (Microsporidian parasite), this protein is Homeobox protein HD-3 (HD-3).